Reading from the N-terminus, the 2254-residue chain is Genome polyprotein (2254 aa).

The SF3 helicase domain occupies 438–592 (QTTINELAQL…EQWLVDNPGR (155 aa)). An ATP-binding site is contributed by 464–471 (GPPGIGKT). Tyr956 is modified (O-(5'-phospho-RNA)-tyrosine). The Peptidase C24 domain maps to 1041–1196 (GDTYDSEGRG…KKLVSRVQTK (156 aa)). Residues His1078, Asp1099, and Cys1163 each act as for 3CLpro activity in the active site. The 126-residue stretch at 1434–1559 (RVLYCLDYSK…GLTPATASIM (126 aa)) folds into the RdRp catalytic domain. The tract at residues 1714–1742 (PAPTRSVASNPEGTQNSNESRPVQPAGPM) is disordered. Positions 1719–1734 (SVASNPEGTQNSNESR) are enriched in polar residues.

Homodimer. Homomultimer. In terms of assembly, interacts with host IEF4E; this interaction plays a role in translation of viral proteins. Post-translationally, specific enzymatic cleavages in vivo yield mature proteins. Pro-Pol is first autocatalytically cleaved, then processes the whole polyprotein. In terms of processing, VPg is uridylylated by the polymerase and is covalently attached to the 5'-end of the polyadenylated genomic and subgenomic RNAs. This uridylylated form acts as a nucleotide-peptide primer for the polymerase.

It localises to the virion. The protein resides in the host cytoplasm. It carries out the reaction a ribonucleoside 5'-triphosphate + H2O = a ribonucleoside 5'-diphosphate + phosphate + H(+). It catalyses the reaction RNA(n) + a ribonucleoside 5'-triphosphate = RNA(n+1) + diphosphate. The catalysed reaction is Endopeptidase with a preference for cleavage when the P1 position is occupied by Glu-|-Xaa and the P1' position is occupied by Gly-|-Yaa.. Functionally, together with NTPase and NS4, initiates the formation of the replication complex. Induces the proliferation of the host smooth ER membranes forming long tubular structures. These remodeled membranes probably form the viral factories that contain the replication complex. In terms of biological role, displays NTPase activity, but no helicase activity. Induces the formation of convoluted membranes derived from the host ER. These remodeled membranes probably form the viral factories that contain the replication complex. Together with NS2 and NS4, initiates the formation of the replication complex. Its function is as follows. Probable key protein responsible for the formation of membrane alterations by the virus. Induces the formation of convoluted membranes derived from the host ER. These remodeled membranes probably form the viral factories that contain the replication complex. Together with NS2 and NTPase, initiates the formation of the replication complex. Viral genome-linked protein is covalently linked to the 5'-end of the positive-strand, negative-strand genomic RNAs and subgenomic RNA. Acts as a genome-linked replication primer. May recruit ribosome to viral RNA thereby promoting viral proteins translation. Interacts with host translation initiation complex to allow the translation of viral proteins. Functionally, protease-polymerase p76 processes the polyprotein: Pro-Pol is first released by autocleavage, then all other proteins are cleaved. Cleaves host translation initiation factor eIF4G1, eIF4G2 and PABP1 thereby inducing a shutdown of host protein synthesis. This shutdown may not prevent viral mRNA from being translated since viral Vpg replaces the cap. It is also an RNA-directed RNA polymerase which replicates genomic and antigenomic viral RNA by recognizing specific signals. Also transcribes a subgenomic mRNA by initiating RNA synthesis internally on antigenomic RNA. This sgRNA codes for structural proteins. Catalyzes the covalent attachment VPg with viral RNAs. In terms of biological role, capsid protein self assembles to form an icosahedral capsid with a T=3 symmetry, about 38 nm in diameter, and consisting of 180 capsid proteins. The capsid encapsulate the genomic RNA and VP2 proteins. Attaches virion to target cells, inducing endocytosis of the viral particle. Acidification of the endosome induces conformational change of capsid protein thereby injecting virus genomic RNA into host cytoplasm. The chain is Genome polyprotein from Porcine enteric sapovirus (isolate Swine/United States/Cowden/1980) (Sw/SV/Cowden/1980/US).